Here is a 181-residue protein sequence, read N- to C-terminus: Shikimate kinase 2 (181 aa).

12–17 (GCGKTT) provides a ligand contact to ATP. Mg(2+) contacts are provided by Thr-16 and Asp-32. The substrate site is built by Asp-34, Arg-58, and Gly-79. Residues 112-126 (EAEPEADLRPTLTGK) form an LID domain region. Arg-120 provides a ligand contact to ATP. Arg-139 is a substrate binding site.

Belongs to the shikimate kinase family. AroL subfamily. Monomer. The cofactor is Mg(2+).

The protein resides in the cytoplasm. The enzyme catalyses shikimate + ATP = 3-phosphoshikimate + ADP + H(+). Its pathway is metabolic intermediate biosynthesis; chorismate biosynthesis; chorismate from D-erythrose 4-phosphate and phosphoenolpyruvate: step 5/7. Functionally, catalyzes the specific phosphorylation of the 3-hydroxyl group of shikimic acid using ATP as a cosubstrate. The chain is Shikimate kinase 2 from Salmonella dublin (strain CT_02021853).